The sequence spans 511 residues: 2-isopropylmalate synthase (511 aa).

One can recognise a Pyruvate carboxyltransferase domain in the interval 4–266 (IDIFDTTLRD…ETGIQLQEIK (263 aa)). Residues Asp13, His201, His203, and Asn237 each coordinate Mn(2+). The tract at residues 392-511 (ELKMVQVQYG…IKESLRAHPV (120 aa)) is regulatory domain.

Belongs to the alpha-IPM synthase/homocitrate synthase family. LeuA type 1 subfamily. Homodimer. The cofactor is Mn(2+).

It is found in the cytoplasm. It carries out the reaction 3-methyl-2-oxobutanoate + acetyl-CoA + H2O = (2S)-2-isopropylmalate + CoA + H(+). It functions in the pathway amino-acid biosynthesis; L-leucine biosynthesis; L-leucine from 3-methyl-2-oxobutanoate: step 1/4. Its function is as follows. Catalyzes the condensation of the acetyl group of acetyl-CoA with 3-methyl-2-oxobutanoate (2-ketoisovalerate) to form 3-carboxy-3-hydroxy-4-methylpentanoate (2-isopropylmalate). The protein is 2-isopropylmalate synthase of Lysinibacillus sphaericus (strain C3-41).